Reading from the N-terminus, the 351-residue chain is 3-hydroxy-4-methyl-anthranilyl-[aryl-carrier protein] 5-monooxygenase (351 aa).

Belongs to the aromatic-ring hydroxylase family. FAD is required as a cofactor.

It catalyses the reaction 3-hydroxy-4-methylanthranilyl-[aryl-carrier protein] + NADH + O2 + H(+) = 3,5-dihydroxy-4-methylanthranilyl-[aryl-carrier protein] + NAD(+) + H2O. Its pathway is antibiotic biosynthesis. Functionally, involved in the biosynthesis of the antitumor antibiotic sibiromycin. Hydroxylates the C5 position of the peptidyl carrier protein (PCP)-bound 4-methyl-3-hydroxyanthranilic acid (4-MHA or 3H4MAA), leading to the formation of the fully substituted anthranilate moiety found in sibiromycin. This is 3-hydroxy-4-methyl-anthranilyl-[aryl-carrier protein] 5-monooxygenase from Streptosporangium sibiricum.